The chain runs to 236 residues: Increased recombination centers protein 22-2 (236 aa).

The signal sequence occupies residues methionine 1–glycine 19. Residues tyrosine 20–leucine 161 are Lumenal-facing. Residues isoleucine 162–isoleucine 182 form a helical membrane-spanning segment. Residues tryptophan 183–alanine 236 lie on the Cytoplasmic side of the membrane.

This sequence belongs to the IRC22 family.

It is found in the endoplasmic reticulum membrane. In terms of biological role, is probably involved in a pathway contributing to genomic integrity. The chain is Increased recombination centers protein 22-2 (IRC22-2) from Candida tropicalis (strain ATCC MYA-3404 / T1) (Yeast).